The sequence spans 242 residues: Ribosomal RNA small subunit methyltransferase G (242 aa).

Residues Gly79, Phe84, 130–131 (AE), and Arg150 each bind S-adenosyl-L-methionine.

Belongs to the methyltransferase superfamily. RNA methyltransferase RsmG family.

Its subcellular location is the cytoplasm. Specifically methylates the N7 position of a guanine in 16S rRNA. The chain is Ribosomal RNA small subunit methyltransferase G from Levilactobacillus brevis (strain ATCC 367 / BCRC 12310 / CIP 105137 / JCM 1170 / LMG 11437 / NCIMB 947 / NCTC 947) (Lactobacillus brevis).